Here is a 223-residue protein sequence, read N- to C-terminus: N-acetylmuramate alpha-1-phosphate uridylyltransferase (223 aa).

UTP contacts are provided by residues 11-13 and lysine 23; that span reads GER. Asparagine 105 contributes to the substrate binding site. Residue aspartate 107 participates in Mg(2+) binding. Substrate is bound by residues aspartate 140 and aspartate 205. Aspartate 205 is a binding site for Mg(2+).

It belongs to the nucleotidyltransferase MurU family. Monomer. Mg(2+) serves as cofactor.

The catalysed reaction is N-acetyl-alpha-D-muramate 1-phosphate + UDP + H(+) = UDP-N-acetyl-alpha-D-muramate + phosphate. It participates in cell wall biogenesis; peptidoglycan recycling. Is completely inhibited by EDTA in vitro. Functionally, catalyzes the formation of UDP-N-acetylmuramate (UDP-MurNAc), a crucial precursor of the bacterial peptidoglycan cell wall, from UTP and MurNAc-alpha-1P. Is involved in peptidoglycan recycling as part of a cell wall recycling pathway that bypasses de novo biosynthesis of the peptidoglycan precursor UDP-MurNAc. Plays a role in intrinsic resistance to fosfomycin, which targets the de novo synthesis of UDP-MurNAc. Is not able to use GlcNAc-alpha-1P and GalNAc-alpha-1P as substrates. Cannot accept other nucleotide triphosphates (ATP, CTP, TTP, or GTP) than UTP. The polypeptide is N-acetylmuramate alpha-1-phosphate uridylyltransferase (Pseudomonas putida (strain ATCC 47054 / DSM 6125 / CFBP 8728 / NCIMB 11950 / KT2440)).